The sequence spans 813 residues: Cadherin-22 (813 aa).

A signal peptide spans 1 to 33 (MRPRPEGALRAGAALSPVLLFLLLLPLLGHLWA). At 34–621 (ASTPAPSSLS…AFVMAASLSP (588 aa)) the chain is on the extracellular side. 5 Cadherin domains span residues 61 to 165 (WVWN…EPRF), 166 to 274 (LHGP…PPRF), 275 to 391 (PQKM…PPEF), 392 to 495 (RPPS…NPPE), and 496 to 613 (LATP…TTAF). N159 is a glycosylation site (N-linked (GlcNAc...) asparagine). N-linked (GlcNAc...) asparagine glycosylation is found at N463 and N609. Residues 622-642 (GALIALLVCVLILVVLALLIL) traverse the membrane as a helical segment. Topologically, residues 643 to 813 (TLRRHHKSHL…HRGDDEAPAS (171 aa)) are cytoplasmic. The disordered stretch occupies residues 696 to 726 (GGDPGGGAASPPQAASSSERHSLPRGPSSPE).

In terms of tissue distribution, predominantly expressed in brain. Abundant in olfactory bulb, cerebrum, and cerebellum, less in pons, medulla, and spinal cord. Low expression in heart. No expression in lung, liver, spleen, kidney, testis, stomach, intestine, colon, and placenta.

It is found in the cell membrane. In terms of biological role, cadherins are calcium-dependent cell adhesion proteins. They preferentially interact with themselves in a homophilic manner in connecting cells; cadherins may thus contribute to the sorting of heterogeneous cell types. PB-cadherins may have a role in the morphological organization of pituitary gland and brain tissues. The sequence is that of Cadherin-22 (Cdh22) from Mus musculus (Mouse).